The primary structure comprises 299 residues: Ribosomal RNA small subunit methyltransferase H (299 aa).

S-adenosyl-L-methionine-binding positions include 36–38 (GGH), aspartate 55, tyrosine 82, aspartate 103, and glutamine 110. Basic and acidic residues-rich tracts occupy residues 269–282 (PVRPSEEEIRENPR) and 289–299 (RAAERIEEGGD). The tract at residues 269–299 (PVRPSEEEIRENPRARSGRLRAAERIEEGGD) is disordered.

This sequence belongs to the methyltransferase superfamily. RsmH family.

It localises to the cytoplasm. It catalyses the reaction cytidine(1402) in 16S rRNA + S-adenosyl-L-methionine = N(4)-methylcytidine(1402) in 16S rRNA + S-adenosyl-L-homocysteine + H(+). In terms of biological role, specifically methylates the N4 position of cytidine in position 1402 (C1402) of 16S rRNA. The sequence is that of Ribosomal RNA small subunit methyltransferase H from Thermotoga maritima (strain ATCC 43589 / DSM 3109 / JCM 10099 / NBRC 100826 / MSB8).